The primary structure comprises 291 residues: tRNA (guanine-N(1)-)-methyltransferase (291 aa).

Residues Gly-160 and 184–189 (IGDYVL) each bind S-adenosyl-L-methionine.

The protein belongs to the RNA methyltransferase TrmD family. In terms of assembly, homodimer.

The protein localises to the cytoplasm. The catalysed reaction is guanosine(37) in tRNA + S-adenosyl-L-methionine = N(1)-methylguanosine(37) in tRNA + S-adenosyl-L-homocysteine + H(+). In terms of biological role, specifically methylates guanosine-37 in various tRNAs. The sequence is that of tRNA (guanine-N(1)-)-methyltransferase from Corynebacterium efficiens (strain DSM 44549 / YS-314 / AJ 12310 / JCM 11189 / NBRC 100395).